The primary structure comprises 377 residues: Tryptophan--tRNA ligase, mitochondrial (377 aa).

Residues Gln21 and His28–Asn31 each bind ATP. Residues Pro22 to Asn31 carry the 'HIGH' region motif. An L-tryptophan-binding site is contributed by Asp181. ATP contacts are provided by residues Gly193 to Asp195, Lys242 to Ser246, and Lys245. Residues Lys242–Ser246 carry the 'KMSKS' region motif.

The protein belongs to the class-I aminoacyl-tRNA synthetase family.

It localises to the mitochondrion matrix. It catalyses the reaction tRNA(Trp) + L-tryptophan + ATP = L-tryptophyl-tRNA(Trp) + AMP + diphosphate + H(+). This Dictyostelium discoideum (Social amoeba) protein is Tryptophan--tRNA ligase, mitochondrial (wars2).